A 390-amino-acid polypeptide reads, in one-letter code: Flagellar P-ring protein (390 aa).

An N-terminal signal peptide occupies residues methionine 1–serine 36.

Belongs to the FlgI family. As to quaternary structure, the basal body constitutes a major portion of the flagellar organelle and consists of four rings (L,P,S, and M) mounted on a central rod.

It is found in the periplasm. The protein resides in the bacterial flagellum basal body. Its function is as follows. Assembles around the rod to form the L-ring and probably protects the motor/basal body from shearing forces during rotation. The polypeptide is Flagellar P-ring protein (Desulfotalea psychrophila (strain LSv54 / DSM 12343)).